Reading from the N-terminus, the 333-residue chain is Anthranilate phosphoribosyltransferase (333 aa).

5-phospho-alpha-D-ribose 1-diphosphate contacts are provided by residues Gly-78, 81-82 (GD), Thr-86, 88-91 (NVST), 106-114 (KHGNYSVSS), and Ser-118. Gly-78 provides a ligand contact to anthranilate. Position 90 (Ser-90) interacts with Mg(2+). Asn-109 contacts anthranilate. Arg-164 is an anthranilate binding site. Residues Asp-222 and Glu-223 each coordinate Mg(2+).

It belongs to the anthranilate phosphoribosyltransferase family. As to quaternary structure, homodimer. The cofactor is Mg(2+).

It carries out the reaction N-(5-phospho-beta-D-ribosyl)anthranilate + diphosphate = 5-phospho-alpha-D-ribose 1-diphosphate + anthranilate. It functions in the pathway amino-acid biosynthesis; L-tryptophan biosynthesis; L-tryptophan from chorismate: step 2/5. Catalyzes the transfer of the phosphoribosyl group of 5-phosphorylribose-1-pyrophosphate (PRPP) to anthranilate to yield N-(5'-phosphoribosyl)-anthranilate (PRA). The sequence is that of Anthranilate phosphoribosyltransferase from Natronomonas pharaonis (strain ATCC 35678 / DSM 2160 / CIP 103997 / JCM 8858 / NBRC 14720 / NCIMB 2260 / Gabara) (Halobacterium pharaonis).